The chain runs to 273 residues: XIAP-associated factor 1 (273 aa).

The TRAF-type zinc finger occupies 22-80; the sequence is LHEAHCLRFIVLCPECEEPIPESKMKEHMEVVHQQTKESQQHPAKCKFCELAVQLSNLD. A disordered region spans residues 181 to 228; it reads GNRRSTVSKDVRPKTKNRNSSTKRETKKQNGTVALPLKSGLQQRADLP.

In terms of assembly, interacts with BIRC1, BIRC2, BIRC3, BIRC4, BIRC7 and BIRC8. Part of an complex consisting of BIRC4, XAF1 and BIRC5; the complex formation requires IFN-beta stimulation. Interacts with RNF114, the interaction increases XAF1 stability and proapoptotic effects, and may regulate IFN signaling.

It localises to the cytoplasm. It is found in the nucleus. The protein resides in the mitochondrion. Functionally, seems to function as a negative regulator of members of the IAP (inhibitor of apoptosis protein) family. Inhibits anti-caspase activity of BIRC4. Induces cleavage and inactivation of BIRC4 independent of caspase activation. Mediates TNF-alpha-induced apoptosis and is involved in apoptosis in trophoblast cells. May inhibit BIRC4 indirectly by activating the mitochondrial apoptosis pathway. After translocation to mitochondria, promotes translocation of BAX to mitochondria and cytochrome c release from mitochondria. Seems to promote the redistribution of BIRC4 from the cytoplasm to the nucleus, probably independent of BIRC4 inactivation which seems to occur in the cytoplasm. The BIRC4-XAF1 complex mediates down-regulation of BIRC5/survivin; the process requires the E3 ligase activity of BIRC4. Seems to be involved in cellular sensitivity to the proapoptotic actions of TRAIL. May be a tumor suppressor by mediating apoptosis resistance of cancer cells. In Mus musculus (Mouse), this protein is XIAP-associated factor 1 (Xaf1).